We begin with the raw amino-acid sequence, 188 residues long: Elongation factor P (188 aa).

Belongs to the elongation factor P family.

It localises to the cytoplasm. Its pathway is protein biosynthesis; polypeptide chain elongation. Involved in peptide bond synthesis. Stimulates efficient translation and peptide-bond synthesis on native or reconstituted 70S ribosomes in vitro. Probably functions indirectly by altering the affinity of the ribosome for aminoacyl-tRNA, thus increasing their reactivity as acceptors for peptidyl transferase. This chain is Elongation factor P, found in Bifidobacterium longum (strain DJO10A).